Consider the following 837-residue polypeptide: Anaphase-promoting complex subunit 4 (837 aa).

2 stretches are compositionally biased toward low complexity: residues 59–81 and 547–581; these read NDNN…NDNN and SSSS…NNNN. 2 disordered regions span residues 59 to 89 and 547 to 588; these read NDNN…KSNK and SSSS…QSGN.

The protein belongs to the APC4 family. In terms of assembly, the APC/C is composed of at least 13 subunits that stay tightly associated throughout the cell cycle: anapc1, anapc2, anapc3, anapc4, anapc5, anapc6, anapc7, anapc8, anapc10, anapc11, cdc20, cdc26 and cdh1.

Its subcellular location is the nucleus. The protein operates within protein modification; protein ubiquitination. In terms of biological role, component of the anaphase promoting complex/cyclosome (APC/C), a cell cycle-regulated E3 ubiquitin-protein ligase complex that controls progression through mitosis and the G1 phase of the cell cycle. The polypeptide is Anaphase-promoting complex subunit 4 (anapc4) (Dictyostelium discoideum (Social amoeba)).